A 770-amino-acid polypeptide reads, in one-letter code: Tripartite terminase subunit 1 (770 aa).

The C3H1-type zinc finger occupies 199–227 (CAICFEELCITANQGETLHRRLLGCICDH). 675-682 (FTSVFHCG) provides a ligand contact to ATP.

This sequence belongs to the herpesviridae TRM1 protein family. In terms of assembly, associates with TRM2 and TRM3 to form the tripartite terminase complex. Interacts with portal protein.

It localises to the host nucleus. Its function is as follows. Component of the molecular motor that translocates viral genomic DNA in empty capsid during DNA packaging. Forms a tripartite terminase complex together with TRM2 and TRM3 in the host cytoplasm. Once the complex reaches the host nucleus, it interacts with the capsid portal vertex. This portal forms a ring in which genomic DNA is translocated into the capsid. TRM1 carries an endonuclease activity that plays an important role for the cleavage of concatemeric viral DNA into unit length genomes. The protein is Tripartite terminase subunit 1 of Varicella-zoster virus (strain Dumas) (HHV-3).